The sequence spans 116 residues: Small ribosomal subunit protein uS11m (116 aa).

Belongs to the universal ribosomal protein uS11 family.

It is found in the mitochondrion. This is Small ribosomal subunit protein uS11m (RPS11) from Chondrus crispus (Carrageen Irish moss).